Here is a 139-residue protein sequence, read N- to C-terminus: MRIMGLDVGSKTVGVAISDPLGFTAQGLEIIKIDEEKAEFGFTRLEELVKQYQVEQFVIGLPKNMNNTNSPRVDASITYGNHIEHLFGLPVHYQDERLTTVEAERMLIEQADISRGKRKKVIDKLAAQLILQNYLNRNF.

It belongs to the YqgF nuclease family.

The protein resides in the cytoplasm. Functionally, could be a nuclease involved in processing of the 5'-end of pre-16S rRNA. This chain is Putative pre-16S rRNA nuclease, found in Streptococcus pyogenes serotype M2 (strain MGAS10270).